The following is a 169-amino-acid chain: Crossover junction endodeoxyribonuclease RuvC (169 aa).

Residues D13, E73, and D145 contribute to the active site. Residues D13, E73, and D145 each contribute to the Mg(2+) site.

Belongs to the RuvC family. As to quaternary structure, homodimer which binds Holliday junction (HJ) DNA. The HJ becomes 2-fold symmetrical on binding to RuvC with unstacked arms; it has a different conformation from HJ DNA in complex with RuvA. In the full resolvosome a probable DNA-RuvA(4)-RuvB(12)-RuvC(2) complex forms which resolves the HJ. Mg(2+) is required as a cofactor.

The protein resides in the cytoplasm. It carries out the reaction Endonucleolytic cleavage at a junction such as a reciprocal single-stranded crossover between two homologous DNA duplexes (Holliday junction).. Its function is as follows. The RuvA-RuvB-RuvC complex processes Holliday junction (HJ) DNA during genetic recombination and DNA repair. Endonuclease that resolves HJ intermediates. Cleaves cruciform DNA by making single-stranded nicks across the HJ at symmetrical positions within the homologous arms, yielding a 5'-phosphate and a 3'-hydroxyl group; requires a central core of homology in the junction. The consensus cleavage sequence is 5'-(A/T)TT(C/G)-3'. Cleavage occurs on the 3'-side of the TT dinucleotide at the point of strand exchange. HJ branch migration catalyzed by RuvA-RuvB allows RuvC to scan DNA until it finds its consensus sequence, where it cleaves and resolves the cruciform DNA. In Solidesulfovibrio magneticus (strain ATCC 700980 / DSM 13731 / RS-1) (Desulfovibrio magneticus), this protein is Crossover junction endodeoxyribonuclease RuvC.